The chain runs to 314 residues: Formate-nitrite transporter (314 aa).

At 1-47 (MQKSTSKYVIDPISIKTNCSSEESYIRCVEYGKGKAHYRNLILLAKA) the chain is on the cytoplasmic side. Residues 48–68 (ILAGVFVGVCAHASGIAGGLF) traverse the membrane as a helical segment. The Extracellular portion of the chain corresponds to 69–77 (YYHKLREYV). The chain crosses the membrane as a helical span at residues 78-98 (GISMSAFVYGFTFPIAFLCII). The Cytoplasmic segment spans residues 99 to 128 (CTGSDLFTGNTLAVTTALLQKKLGLLCYMR). Residues 129–149 (VMCISLVGNYIGAVAFAFFVS) form a helical membrane-spanning segment. Residues 150 to 185 (YGSGAFSINTDTSKNHIFQFLNDIAIKKVSHSFIEC) lie on the Extracellular side of the membrane. A helical transmembrane segment spans residues 186 to 206 (ICLAIGCNIFVCLAVYFVLSI). The Cytoplasmic portion of the chain corresponds to 207 to 211 (KDGSG). Residues 212-232 (LVFSVFFAVYAFAIAGYEHII) form a helical membrane-spanning segment. The Extracellular segment spans residues 233-260 (ANIYTLNLALMISNDISFTQVYFKNLLP). A helical transmembrane segment spans residues 261–281 (TLIGNYIAGGLVLAFPLFFIY). At 282-314 (RSCYYDYDKMNDELNTVVLKTLSLELQNESNHI) the chain is on the cytoplasmic side.

The protein belongs to the FNT transporter (TC 1.A.16) family. Homopentamer.

It is found in the cell membrane. Its subcellular location is the vacuole membrane. It catalyses the reaction (S)-lactate(in) + H(+)(in) = (S)-lactate(out) + H(+)(out). The catalysed reaction is formate(in) + H(+)(in) = formate(out) + H(+)(out). The enzyme catalyses pyruvate(out) + H(+)(out) = pyruvate(in) + H(+)(in). It carries out the reaction acetate(out) + H(+)(out) = acetate(in) + H(+)(in). With respect to regulation, inhibited by the Malaria Box compound MMV007839 and its derivatives BH296 and BH267.meta. Its function is as follows. Monocarboxylate-proton symporter that mediates the efflux of the waste product lactate in the intraerythrocytic parasites; active in acidic-to-neutral pH range. Transports L-lactate. In Plasmodium malariae, this protein is Formate-nitrite transporter.